A 311-amino-acid polypeptide reads, in one-letter code: Replication initiation protein (311 aa).

The protein belongs to the plasmid replication initiation factor family.

This protein is probably a specific topoisomerase involved in initiating replication. This protein is specifically required and may be rate-limiting for replication of the plasmid in vivo. This is Replication initiation protein (repD) from Staphylococcus aureus.